The following is a 535-amino-acid chain: CTP synthase (535 aa).

The segment at 1–267 (MTKFIFVTGG…DDIVIKRLDL (267 aa)) is amidoligase domain. Residue S13 coordinates CTP. S13 provides a ligand contact to UTP. An ATP-binding site is contributed by 14 to 19 (SLGKGI). Residue Y54 coordinates L-glutamine. ATP is bound at residue D71. Mg(2+) is bound by residues D71 and E141. CTP contacts are provided by residues 148–150 (DIE), 188–193 (KTKPTQ), and K224. Residues 188–193 (KTKPTQ) and K224 each bind UTP. 240–242 (RDA) lines the ATP pocket. Positions 293–535 (TIGLVGKYVS…VEAAYKHQNK (243 aa)) constitute a Glutamine amidotransferase type-1 domain. G355 contributes to the L-glutamine binding site. Residue C382 is the Nucleophile; for glutamine hydrolysis of the active site. Residues 383-386 (LGMQ), E406, and R463 contribute to the L-glutamine site. Residues H508 and E510 contribute to the active site.

This sequence belongs to the CTP synthase family. As to quaternary structure, homotetramer.

It catalyses the reaction UTP + L-glutamine + ATP + H2O = CTP + L-glutamate + ADP + phosphate + 2 H(+). The enzyme catalyses L-glutamine + H2O = L-glutamate + NH4(+). It carries out the reaction UTP + NH4(+) + ATP = CTP + ADP + phosphate + 2 H(+). The protein operates within pyrimidine metabolism; CTP biosynthesis via de novo pathway; CTP from UDP: step 2/2. Allosterically activated by GTP, when glutamine is the substrate; GTP has no effect on the reaction when ammonia is the substrate. The allosteric effector GTP functions by stabilizing the protein conformation that binds the tetrahedral intermediate(s) formed during glutamine hydrolysis. Inhibited by the product CTP, via allosteric rather than competitive inhibition. In terms of biological role, catalyzes the ATP-dependent amination of UTP to CTP with either L-glutamine or ammonia as the source of nitrogen. Regulates intracellular CTP levels through interactions with the four ribonucleotide triphosphates. In Staphylococcus haemolyticus (strain JCSC1435), this protein is CTP synthase.